The following is a 179-amino-acid chain: GTP-dependent dephospho-CoA kinase (179 aa).

GTP contacts are provided by D55, V57, D74, K76, and E128.

It belongs to the GTP-dependent DPCK family.

It carries out the reaction 3'-dephospho-CoA + GTP = GDP + CoA + H(+). The protein operates within cofactor biosynthesis; coenzyme A biosynthesis. Its function is as follows. Catalyzes the GTP-dependent phosphorylation of the 3'-hydroxyl group of dephosphocoenzyme A to form coenzyme A (CoA). The sequence is that of GTP-dependent dephospho-CoA kinase from Saccharolobus solfataricus (strain ATCC 35092 / DSM 1617 / JCM 11322 / P2) (Sulfolobus solfataricus).